The following is a 399-amino-acid chain: uncharacterized protein (399 aa).

8 WD repeats span residues 59 to 99 (EHKD…QICQ), 102 to 141 (GHKD…EFIT), 144 to 185 (ETVD…QVMY), 187 to 227 (HTAP…PECR), 241 to 280 (ETAA…ILAS), 283 to 322 (AQTE…FRKS), 324 to 363 (PHEQ…LLGE), and 366 to 399 (GHQE…DCEH).

The protein resides in the cytoplasm. It localises to the nucleus. This is an uncharacterized protein from Schizosaccharomyces pombe (strain 972 / ATCC 24843) (Fission yeast).